Reading from the N-terminus, the 434-residue chain is ATP-dependent protease ATPase subunit HslU (434 aa).

ATP is bound by residues Val-18, Gly-60–Glu-65, Asp-247, Glu-312, and Arg-384.

It belongs to the ClpX chaperone family. HslU subfamily. A double ring-shaped homohexamer of HslV is capped on each side by a ring-shaped HslU homohexamer. The assembly of the HslU/HslV complex is dependent on binding of ATP.

It localises to the cytoplasm. ATPase subunit of a proteasome-like degradation complex; this subunit has chaperone activity. The binding of ATP and its subsequent hydrolysis by HslU are essential for unfolding of protein substrates subsequently hydrolyzed by HslV. HslU recognizes the N-terminal part of its protein substrates and unfolds these before they are guided to HslV for hydrolysis. In Bradyrhizobium sp. (strain BTAi1 / ATCC BAA-1182), this protein is ATP-dependent protease ATPase subunit HslU.